The following is a 128-amino-acid chain: 3-aminoacrylate deaminase RutC (128 aa).

This sequence belongs to the RutC family.

It carries out the reaction (Z)-3-aminoacrylate + H2O + H(+) = 3-oxopropanoate + NH4(+). Involved in pyrimidine catabolism. Catalyzes the deamination of 3-aminoacrylate to malonic semialdehyde, a reaction that can also occur spontaneously. RutC may facilitate the reaction and modulate the metabolic fitness, rather than catalyzing essential functions. This Serratia proteamaculans (strain 568) protein is 3-aminoacrylate deaminase RutC.